The following is a 140-amino-acid chain: Nucleoside diphosphate kinase (140 aa).

ATP-binding residues include K11, F59, R87, T93, R104, and N114. Residue H117 is the Pros-phosphohistidine intermediate of the active site.

Belongs to the NDK family. As to quaternary structure, homotetramer. The cofactor is Mg(2+).

It localises to the cytoplasm. The catalysed reaction is a 2'-deoxyribonucleoside 5'-diphosphate + ATP = a 2'-deoxyribonucleoside 5'-triphosphate + ADP. It carries out the reaction a ribonucleoside 5'-diphosphate + ATP = a ribonucleoside 5'-triphosphate + ADP. Functionally, major role in the synthesis of nucleoside triphosphates other than ATP. The ATP gamma phosphate is transferred to the NDP beta phosphate via a ping-pong mechanism, using a phosphorylated active-site intermediate. The chain is Nucleoside diphosphate kinase from Rickettsia felis (strain ATCC VR-1525 / URRWXCal2) (Rickettsia azadi).